We begin with the raw amino-acid sequence, 257 residues long: Putative hydro-lyase Bamb_5282 (257 aa).

Belongs to the D-glutamate cyclase family.

The protein is Putative hydro-lyase Bamb_5282 of Burkholderia ambifaria (strain ATCC BAA-244 / DSM 16087 / CCUG 44356 / LMG 19182 / AMMD) (Burkholderia cepacia (strain AMMD)).